The sequence spans 96 residues: Beta-defensin 20 (96 aa).

The signal sequence occupies residues 1–21 (MKLLQVLLVLLFVALADGAQP). 3 disulfides stabilise this stretch: cysteine 24/cysteine 52, cysteine 32/cysteine 46, and cysteine 36/cysteine 53.

Belongs to the beta-defensin family.

Its subcellular location is the secreted. Functionally, has antibacterial activity. The polypeptide is Beta-defensin 20 (Defb20) (Mus musculus (Mouse)).